We begin with the raw amino-acid sequence, 353 residues long: Methionine import ATP-binding protein MetN (353 aa).

One can recognise an ABC transporter domain in the interval 7-249 (LENIDVTFKQ…PKEELSRQFV (243 aa)). 41 to 48 (GYSGAGKS) serves as a coordination point for ATP.

This sequence belongs to the ABC transporter superfamily. Methionine importer (TC 3.A.1.24) family. As to quaternary structure, the complex is composed of two ATP-binding proteins (MetN), two transmembrane proteins (MetI) and a solute-binding protein (MetQ).

It localises to the cell membrane. The catalysed reaction is L-methionine(out) + ATP + H2O = L-methionine(in) + ADP + phosphate + H(+). It catalyses the reaction D-methionine(out) + ATP + H2O = D-methionine(in) + ADP + phosphate + H(+). Functionally, part of the ABC transporter complex MetNIQ involved in methionine import. Responsible for energy coupling to the transport system. This Ligilactobacillus salivarius (strain UCC118) (Lactobacillus salivarius) protein is Methionine import ATP-binding protein MetN.